The sequence spans 333 residues: Protein amalgam (333 aa).

A signal peptide spans 1 to 23 (MARLRLLIGLIFCLAISLDSVLS). One can recognise an Ig-like V-type domain in the interval 25–128 (PVISQISKDV…VLVSATEKVT (104 aa)). N-linked (GlcNAc...) asparagine glycans are attached at residues Asn45 and Asn86. Intrachain disulfides connect Cys46–Cys117, Cys161–Cys208, and Cys251–Cys307. Ig-like C2-type domains follow at residues 139 to 223 (PVIA…RLIR) and 230 to 323 (PQIA…LHLF). Asn308 carries N-linked (GlcNAc...) asparagine glycosylation.

It is found in the cell membrane. The sequence is that of Protein amalgam (Ama) from Drosophila melanogaster (Fruit fly).